We begin with the raw amino-acid sequence, 163 residues long: MSEAHNELTHLDAAGHARMVDVGDKAVTAREAVARGRVVMQPETLALIMDGKLPKGDVLAVARVAGIMAAKRTAELIPLCHLLNLSHASVQFTPDPASNALEIEATVRCQGQTGVEMEALTAVSIAALTIYDMCKAVDKTMQIDQIRLIAKRGGRSGDWQRPR.

Residues 79-81 and 117-118 contribute to the substrate site; these read LCH and ME. The active site involves D132.

This sequence belongs to the MoaC family. As to quaternary structure, homohexamer; trimer of dimers.

The catalysed reaction is (8S)-3',8-cyclo-7,8-dihydroguanosine 5'-triphosphate = cyclic pyranopterin phosphate + diphosphate. It functions in the pathway cofactor biosynthesis; molybdopterin biosynthesis. Functionally, catalyzes the conversion of (8S)-3',8-cyclo-7,8-dihydroguanosine 5'-triphosphate to cyclic pyranopterin monophosphate (cPMP). The polypeptide is Cyclic pyranopterin monophosphate synthase (Chloroflexus aurantiacus (strain ATCC 29366 / DSM 635 / J-10-fl)).